A 93-amino-acid chain; its full sequence is Alpha-defensin 23 (93 aa).

The first 19 residues, 1 to 19 (MKTLVLLSALILLAFQVQA), serve as a signal peptide directing secretion. The propeptide occupies 20–58 (DPIQNTDEETKTEEQPGKEDQAVSVSFGDPEGSSLQEES). The disordered stretch occupies residues 24–54 (NTDEETKTEEQPGKEDQAVSVSFGDPEGSSL). A compositionally biased stretch (basic and acidic residues) spans 27-40 (EETKTEEQPGKEDQ). 3 disulfide bridges follow: Cys64–Cys92, Cys66–Cys81, and Cys71–Cys91.

Belongs to the alpha-defensin family.

Its subcellular location is the secreted. In terms of biological role, may have microbicidal activities. The protein is Alpha-defensin 23 (Defa23) of Mus musculus (Mouse).